A 921-amino-acid polypeptide reads, in one-letter code: Isoleucine--tRNA ligase (921 aa).

The 'HIGH' region motif lies at 57 to 67 (PYANGNIHVGT). Glu551 contacts L-isoleucyl-5'-AMP. The 'KMSKS' region signature appears at 592 to 596 (KMSKS). Residue Lys595 coordinates ATP. Zn(2+) is bound by residues Cys885, Cys888, Cys905, and Cys908.

The protein belongs to the class-I aminoacyl-tRNA synthetase family. IleS type 1 subfamily. In terms of assembly, monomer. The cofactor is Zn(2+).

The protein resides in the cytoplasm. It catalyses the reaction tRNA(Ile) + L-isoleucine + ATP = L-isoleucyl-tRNA(Ile) + AMP + diphosphate. Catalyzes the attachment of isoleucine to tRNA(Ile). As IleRS can inadvertently accommodate and process structurally similar amino acids such as valine, to avoid such errors it has two additional distinct tRNA(Ile)-dependent editing activities. One activity is designated as 'pretransfer' editing and involves the hydrolysis of activated Val-AMP. The other activity is designated 'posttransfer' editing and involves deacylation of mischarged Val-tRNA(Ile). This is Isoleucine--tRNA ligase from Kosmotoga olearia (strain ATCC BAA-1733 / DSM 21960 / TBF 19.5.1).